Reading from the N-terminus, the 118-residue chain is Large ribosomal subunit protein bL17 (118 aa).

This sequence belongs to the bacterial ribosomal protein bL17 family. As to quaternary structure, part of the 50S ribosomal subunit. Contacts protein L32.

The polypeptide is Large ribosomal subunit protein bL17 (Phytoplasma mali (strain AT)).